We begin with the raw amino-acid sequence, 403 residues long: Peroxisomal membrane protein PEX13 (403 aa).

The segment covering M1–P11 has biased composition (pro residues). The interval M1–N69 is disordered. The Peroxisomal matrix portion of the chain corresponds to M1 to E134. Polar residues predominate over residues P59–N69. A helical membrane pass occupies residues S135–Y155. Residues M145–S233 are targeting to peroxisomes. Residues N156–H174 are Cytoplasmic-facing. The helical transmembrane segment at F175–Y192 threads the bilayer. The tract at residues F175–Q196 is interaction with PEX19. Residues R193–S233 are Peroxisomal matrix-facing. The chain crosses the membrane as a helical span at residues W234–L254. Topologically, residues S255–L403 are cytoplasmic. Residues D272–K336 form the SH3 domain. 2 disordered regions span residues K341 to V364 and F381 to L403. The segment covering E344 to V364 has biased composition (polar residues).

Belongs to the peroxin-13 family. In terms of assembly, interacts (via SH3 domain) with PEX14 (via SH3-binding motif); forming the PEX13-PEX14 docking complex. Interacts with PEX19.

The protein localises to the peroxisome membrane. Its function is as follows. Component of the PEX13-PEX14 docking complex, a translocon channel that specifically mediates the import of peroxisomal cargo proteins bound to PEX5 receptor. The PEX13-PEX14 docking complex forms a large import pore which can be opened to a diameter of about 9 nm. Mechanistically, PEX5 receptor along with cargo proteins associates with the PEX14 subunit of the PEX13-PEX14 docking complex in the cytosol, leading to the insertion of the receptor into the organelle membrane with the concomitant translocation of the cargo into the peroxisome matrix. Involved in the import of PTS1- and PTS2-type containing proteins. In Rattus norvegicus (Rat), this protein is Peroxisomal membrane protein PEX13.